The primary structure comprises 390 residues: GTPase Obg (390 aa).

Positions 1–159 (MKFVDEATIL…RDLQLELMLL (159 aa)) constitute an Obg domain. The disordered stretch occupies residues 127–146 (NTRFKSSVNRTPRQKTMGTP). The segment covering 129 to 143 (RFKSSVNRTPRQKTM) has biased composition (polar residues). In terms of domain architecture, OBG-type G spans 160 to 333 (ADVGMLGMPN…LCWDVMHFII (174 aa)). GTP contacts are provided by residues 166–173 (GMPNAGKS), 191–195 (FTTLV), 213–216 (DIPG), 283–286 (NKID), and 314–316 (SAA). 2 residues coordinate Mg(2+): Ser173 and Thr193. The segment covering 364 to 384 (MEAEAEEEWDDDWDEDDDEGV) has biased composition (acidic residues). Residues 364 to 390 (MEAEAEEEWDDDWDEDDDEGVEIVYQR) form a disordered region.

This sequence belongs to the TRAFAC class OBG-HflX-like GTPase superfamily. OBG GTPase family. Monomer. Requires Mg(2+) as cofactor.

Its subcellular location is the cytoplasm. In terms of biological role, an essential GTPase which binds GTP, GDP and possibly (p)ppGpp with moderate affinity, with high nucleotide exchange rates and a fairly low GTP hydrolysis rate. Plays a role in control of the cell cycle, stress response, ribosome biogenesis and in those bacteria that undergo differentiation, in morphogenesis control. The chain is GTPase Obg from Cronobacter sakazakii (strain ATCC BAA-894) (Enterobacter sakazakii).